Consider the following 242-residue polypeptide: Methylthioribulose-1-phosphate dehydratase (242 aa).

Cys-97 lines the substrate pocket. Zn(2+)-binding residues include His-115 and His-117. The active-site Proton donor/acceptor is the Glu-139. His-195 contacts Zn(2+).

It belongs to the aldolase class II family. MtnB subfamily. In terms of assembly, homotetramer. Interacts with APAF1. May interact with CASP1. Requires Zn(2+) as cofactor.

It localises to the cytoplasm. The catalysed reaction is 5-(methylsulfanyl)-D-ribulose 1-phosphate = 5-methylsulfanyl-2,3-dioxopentyl phosphate + H2O. It participates in amino-acid biosynthesis; L-methionine biosynthesis via salvage pathway; L-methionine from S-methyl-5-thio-alpha-D-ribose 1-phosphate: step 2/6. In terms of biological role, catalyzes the dehydration of methylthioribulose-1-phosphate (MTRu-1-P) into 2,3-diketo-5-methylthiopentyl-1-phosphate (DK-MTP-1-P). Functions in the methionine salvage pathway, which plays a key role in cancer, apoptosis, microbial proliferation and inflammation. May inhibit the CASP1-related inflammatory response (pyroptosis), the CASP9-dependent apoptotic pathway and the cytochrome c-dependent and APAF1-mediated cell death. The protein is Methylthioribulose-1-phosphate dehydratase of Bos taurus (Bovine).